We begin with the raw amino-acid sequence, 187 residues long: Choriogonadotropin subunit beta variant 1 (187 aa).

The first 50 residues, 1–50 (MSTFPVLAEDIPLRERHVKGRVDPHFRAPKMEMFQRLLLLLLLSMGGTWA), serve as a signal peptide directing secretion. Cystine bridges form between C59-C107, C73-C122, C76-C160, C84-C138, C88-C140, and C143-C150. N-linked (GlcNAc...) asparagine glycans are attached at residues N63 and N80. The tract at residues 161 to 187 (DDPRFQDSSSSKAPPPSLPSPSRLPGP) is disordered. The span at 173–187 (APPPSLPSPSRLPGP) shows a compositional bias: pro residues.

Belongs to the glycoprotein hormones subunit beta family. In terms of tissue distribution, expressed in placenta, testis and pituitary.

Its subcellular location is the secreted. The protein is Choriogonadotropin subunit beta variant 1 (CGB1) of Homo sapiens (Human).